A 213-amino-acid polypeptide reads, in one-letter code: LIM domain-containing protein PLIM2c (213 aa).

LIM zinc-binding domains are found at residues 9-69 (DKCK…LFKE) and 105-165 (DKCA…LFLE). Residues 177–213 (ANHRRSTAEEDKTEPKEDEANPTEEETSDAAAEEHES) are disordered. Residues 182 to 195 (STAEEDKTEPKEDE) show a composition bias toward basic and acidic residues.

In terms of assembly, interacts with F-actin. In terms of tissue distribution, exclusively expressed in pollen grains.

The protein localises to the cytoplasm. It is found in the cytoskeleton. In terms of biological role, binds to actin filaments and promotes cross-linking into thick bundles. Has an actin-stabilizing activity. Associates predominantly with long and dynamic actin bundles in the shank of growing pollen tubes. The actin regulatory activities are inhibited by pH &gt; 6.8 and/or high [Ca(2+)]. The sequence is that of LIM domain-containing protein PLIM2c from Arabidopsis thaliana (Mouse-ear cress).